Reading from the N-terminus, the 191-residue chain is Ribonuclease HII (191 aa).

The region spanning 7 to 191 is the RNase H type-2 domain; the sequence is ILMAGVDEVG…YSPVADLISK (185 aa). A divalent metal cation is bound by residues aspartate 13, glutamate 14, and aspartate 103.

The protein belongs to the RNase HII family. It depends on Mn(2+) as a cofactor. Mg(2+) is required as a cofactor.

The protein resides in the cytoplasm. It catalyses the reaction Endonucleolytic cleavage to 5'-phosphomonoester.. Endonuclease that specifically degrades the RNA of RNA-DNA hybrids. The protein is Ribonuclease HII of Legionella pneumophila (strain Paris).